Here is a 335-residue protein sequence, read N- to C-terminus: Glucose-dependent insulinotropic receptor (335 aa).

Residues 1–12 (MESSFSFGVILA) are Extracellular-facing. A helical membrane pass occupies residues 13 to 33 (VLASLIIATNTLVAVAVLLLI). Topologically, residues 34-37 (HKND) are cytoplasmic. A helical transmembrane segment spans residues 38-58 (GVSLCFTLNLAVADTLIGVAI). Over 59-81 (SGLLTDQLSSPSRPTQKTLCSLR) the chain is Extracellular. Residues 82–102 (MAFVTSSAAASVLTVMLITFD) form a helical membrane-spanning segment. Over 103–125 (RYLAIKQPFRYLKIMSGFVAGAC) the chain is Cytoplasmic. Residues 126–146 (IAGLWLVSYLIGFLPLGIPMF) traverse the membrane as a helical segment. Topologically, residues 147-164 (QQTAYKGQCSFFAVFHPH) are extracellular. Residues 165-185 (FVLTLSCVGFFPAMLLFVFFY) traverse the membrane as a helical segment. The Cytoplasmic portion of the chain corresponds to 186 to 226 (CDMLKIASMHSQQIRKMEHAGAMAGGYRSPRTPSDFKALRT). The chain crosses the membrane as a helical span at residues 227–247 (VSVLIGSFALSWTPFLITGIV). Topologically, residues 248-262 (QVACQECHLYLVLER) are extracellular. A helical membrane pass occupies residues 263-283 (YLWLLGVGNSLLNPLIYAYWQ). The Cytoplasmic portion of the chain corresponds to 284-335 (KEVRLQLYHMALGVKKVLTSFLLFLSARNCGPERPRESSCHIVTISSSEFDG).

Belongs to the G-protein coupled receptor 1 family. Predominantly expressed in the pancreas, especially in the islets.

The protein resides in the cell membrane. Its function is as follows. Receptor for the endogenous fatty-acid ethanolamide oleoylethanolamide (OEA) and lysophosphatidylcholine (LPC). Functions as a glucose-dependent insulinotropic receptor. The activity of this receptor is mediated by G proteins which activate adenylate cyclase. Seems to act through a G(s) mediated pathway. The protein is Glucose-dependent insulinotropic receptor (GPR119) of Homo sapiens (Human).